Reading from the N-terminus, the 332-residue chain is Lipoyl synthase (332 aa).

[4Fe-4S] cluster-binding residues include cysteine 74, cysteine 79, cysteine 85, cysteine 100, cysteine 104, cysteine 107, and serine 314. Positions 85 to 303 constitute a Radical SAM core domain; the sequence is CFGKGTATFM…EQEAYRMGFS (219 aa).

The protein belongs to the radical SAM superfamily. Lipoyl synthase family. [4Fe-4S] cluster serves as cofactor.

It localises to the cytoplasm. It catalyses the reaction [[Fe-S] cluster scaffold protein carrying a second [4Fe-4S](2+) cluster] + N(6)-octanoyl-L-lysyl-[protein] + 2 oxidized [2Fe-2S]-[ferredoxin] + 2 S-adenosyl-L-methionine + 4 H(+) = [[Fe-S] cluster scaffold protein] + N(6)-[(R)-dihydrolipoyl]-L-lysyl-[protein] + 4 Fe(3+) + 2 hydrogen sulfide + 2 5'-deoxyadenosine + 2 L-methionine + 2 reduced [2Fe-2S]-[ferredoxin]. It functions in the pathway protein modification; protein lipoylation via endogenous pathway; protein N(6)-(lipoyl)lysine from octanoyl-[acyl-carrier-protein]: step 2/2. Its function is as follows. Catalyzes the radical-mediated insertion of two sulfur atoms into the C-6 and C-8 positions of the octanoyl moiety bound to the lipoyl domains of lipoate-dependent enzymes, thereby converting the octanoylated domains into lipoylated derivatives. The protein is Lipoyl synthase of Verminephrobacter eiseniae (strain EF01-2).